The sequence spans 585 residues: Arginine--tRNA ligase (585 aa).

Positions 126–136 (PNIAKEMHVGH) match the 'HIGH' region motif.

The protein belongs to the class-I aminoacyl-tRNA synthetase family. Monomer.

The protein localises to the cytoplasm. It catalyses the reaction tRNA(Arg) + L-arginine + ATP = L-arginyl-tRNA(Arg) + AMP + diphosphate. The sequence is that of Arginine--tRNA ligase from Picosynechococcus sp. (strain ATCC 27264 / PCC 7002 / PR-6) (Agmenellum quadruplicatum).